The sequence spans 155 residues: Lipoprotein signal peptidase (155 aa).

Helical transmembrane passes span 52-72 and 85-105; these read ILQGQMWFFYVITLVVIAGIV and LGVALALMLGGAIGNFIDRVF. Residues Asp-111 and Asp-129 contribute to the active site. The chain crosses the membrane as a helical span at residues 124–144; it reads IFNIADSSLCVGVILLFIQML.

Belongs to the peptidase A8 family.

The protein localises to the cell membrane. The catalysed reaction is Release of signal peptides from bacterial membrane prolipoproteins. Hydrolyzes -Xaa-Yaa-Zaa-|-(S,diacylglyceryl)Cys-, in which Xaa is hydrophobic (preferably Leu), and Yaa (Ala or Ser) and Zaa (Gly or Ala) have small, neutral side chains.. Its pathway is protein modification; lipoprotein biosynthesis (signal peptide cleavage). In terms of biological role, this protein specifically catalyzes the removal of signal peptides from prolipoproteins. The chain is Lipoprotein signal peptidase from Bacillus pumilus (strain SAFR-032).